Here is a 424-residue protein sequence, read N- to C-terminus: UDP-N-acetylglucosamine 1-carboxyvinyltransferase (424 aa).

Residue 22 to 23 (KN) participates in phosphoenolpyruvate binding. Residue Arg93 participates in UDP-N-acetyl-alpha-D-glucosamine binding. Cys117 functions as the Proton donor in the catalytic mechanism. A 2-(S-cysteinyl)pyruvic acid O-phosphothioketal modification is found at Cys117. UDP-N-acetyl-alpha-D-glucosamine is bound by residues 162-165 (KVSV), Asp307, and Ile329.

This sequence belongs to the EPSP synthase family. MurA subfamily.

The protein resides in the cytoplasm. It carries out the reaction phosphoenolpyruvate + UDP-N-acetyl-alpha-D-glucosamine = UDP-N-acetyl-3-O-(1-carboxyvinyl)-alpha-D-glucosamine + phosphate. It participates in cell wall biogenesis; peptidoglycan biosynthesis. Cell wall formation. Adds enolpyruvyl to UDP-N-acetylglucosamine. This is UDP-N-acetylglucosamine 1-carboxyvinyltransferase from Actinobacillus pleuropneumoniae serotype 3 (strain JL03).